Consider the following 352-residue polypeptide: UDP-N-acetylglucosamine--N-acetylmuramyl-(pentapeptide) pyrophosphoryl-undecaprenol N-acetylglucosamine transferase (352 aa).

UDP-N-acetyl-alpha-D-glucosamine is bound by residues 12–14 (TGG), asparagine 124, arginine 160, serine 188, and glutamine 287.

The protein belongs to the glycosyltransferase 28 family. MurG subfamily.

It localises to the cell inner membrane. The catalysed reaction is di-trans,octa-cis-undecaprenyl diphospho-N-acetyl-alpha-D-muramoyl-L-alanyl-D-glutamyl-meso-2,6-diaminopimeloyl-D-alanyl-D-alanine + UDP-N-acetyl-alpha-D-glucosamine = di-trans,octa-cis-undecaprenyl diphospho-[N-acetyl-alpha-D-glucosaminyl-(1-&gt;4)]-N-acetyl-alpha-D-muramoyl-L-alanyl-D-glutamyl-meso-2,6-diaminopimeloyl-D-alanyl-D-alanine + UDP + H(+). The protein operates within cell wall biogenesis; peptidoglycan biosynthesis. Functionally, cell wall formation. Catalyzes the transfer of a GlcNAc subunit on undecaprenyl-pyrophosphoryl-MurNAc-pentapeptide (lipid intermediate I) to form undecaprenyl-pyrophosphoryl-MurNAc-(pentapeptide)GlcNAc (lipid intermediate II). This Dechloromonas aromatica (strain RCB) protein is UDP-N-acetylglucosamine--N-acetylmuramyl-(pentapeptide) pyrophosphoryl-undecaprenol N-acetylglucosamine transferase.